The sequence spans 429 residues: Adenylosuccinate synthetase (429 aa).

Residues 12–18 and 40–42 contribute to the GTP site; these read GDEGKGK and GHT. Residue Asp-13 is the Proton acceptor of the active site. Residues Asp-13 and Gly-40 each coordinate Mg(2+). IMP is bound by residues 13–16, 38–41, Thr-129, Arg-143, Gln-223, Thr-238, and Arg-302; these read DEGK and NAGH. The Proton donor role is filled by His-41. A substrate-binding site is contributed by 298-304; that stretch reads TVTGRQR. Residues Arg-304, 330–332, and 412–414 each bind GTP; these read KID and STS.

It belongs to the adenylosuccinate synthetase family. Homodimer. It depends on Mg(2+) as a cofactor.

The protein resides in the cytoplasm. It catalyses the reaction IMP + L-aspartate + GTP = N(6)-(1,2-dicarboxyethyl)-AMP + GDP + phosphate + 2 H(+). The protein operates within purine metabolism; AMP biosynthesis via de novo pathway; AMP from IMP: step 1/2. Functionally, plays an important role in the de novo pathway of purine nucleotide biosynthesis. Catalyzes the first committed step in the biosynthesis of AMP from IMP. This Erythrobacter litoralis (strain HTCC2594) protein is Adenylosuccinate synthetase.